A 409-amino-acid polypeptide reads, in one-letter code: Immediate early response gene 5-like protein (409 aa).

Disordered regions lie at residues Gln-168–Ser-237 and Gly-312–Pro-335. The segment covering Gln-184–Pro-195 has biased composition (pro residues). 2 stretches are compositionally biased toward low complexity: residues Ala-196–Pro-212 and Pro-220–Ser-237. Acidic residues predominate over residues Gln-313 to Gly-324.

This sequence belongs to the IER family.

This is Immediate early response gene 5-like protein (Ier5l) from Rattus norvegicus (Rat).